A 251-amino-acid polypeptide reads, in one-letter code: Uridylate kinase (251 aa).

An ATP-binding site is contributed by Lys19–Gly22. Gly61 serves as a coordination point for UMP. ATP is bound by residues Gly62 and Arg66. UMP-binding positions include Asp81 and Ile142 to Thr149. Thr169, Gln170, Tyr175, and Asp178 together coordinate ATP.

This sequence belongs to the UMP kinase family. Homohexamer.

It is found in the cytoplasm. It carries out the reaction UMP + ATP = UDP + ADP. Its pathway is pyrimidine metabolism; CTP biosynthesis via de novo pathway; UDP from UMP (UMPK route): step 1/1. Inhibited by UTP. Catalyzes the reversible phosphorylation of UMP to UDP. This Hyphomonas neptunium (strain ATCC 15444) protein is Uridylate kinase.